We begin with the raw amino-acid sequence, 97 residues long: Aspartyl/glutamyl-tRNA(Asn/Gln) amidotransferase subunit C (97 aa).

It belongs to the GatC family. As to quaternary structure, heterotrimer of A, B and C subunits.

The catalysed reaction is L-glutamyl-tRNA(Gln) + L-glutamine + ATP + H2O = L-glutaminyl-tRNA(Gln) + L-glutamate + ADP + phosphate + H(+). It carries out the reaction L-aspartyl-tRNA(Asn) + L-glutamine + ATP + H2O = L-asparaginyl-tRNA(Asn) + L-glutamate + ADP + phosphate + 2 H(+). Functionally, allows the formation of correctly charged Asn-tRNA(Asn) or Gln-tRNA(Gln) through the transamidation of misacylated Asp-tRNA(Asn) or Glu-tRNA(Gln) in organisms which lack either or both of asparaginyl-tRNA or glutaminyl-tRNA synthetases. The reaction takes place in the presence of glutamine and ATP through an activated phospho-Asp-tRNA(Asn) or phospho-Glu-tRNA(Gln). The chain is Aspartyl/glutamyl-tRNA(Asn/Gln) amidotransferase subunit C from Listeria innocua serovar 6a (strain ATCC BAA-680 / CLIP 11262).